A 154-amino-acid chain; its full sequence is Transcriptional repressor NrdR (154 aa).

A zinc finger spans residues 3 to 34; that stretch reads CPFCGANDTKVIDSRLVAEGEQVRRRRECLAC. An ATP-cone domain is found at 49 to 139; it reads PRLIKTDGSR…VYRRFQDLNE (91 aa).

It belongs to the NrdR family. The cofactor is Zn(2+).

Its function is as follows. Negatively regulates transcription of bacterial ribonucleotide reductase nrd genes and operons by binding to NrdR-boxes. This Pseudomonas fluorescens (strain Pf0-1) protein is Transcriptional repressor NrdR.